We begin with the raw amino-acid sequence, 296 residues long: Protease HtpX homolog (296 aa).

The next 2 helical transmembrane spans lie at 14–34 (VFLLIGFLALVGIVGAAVGYL) and 38–58 (SLVTGIIGALLVGVIYAVIMI). His-144 provides a ligand contact to Zn(2+). Glu-145 is an active-site residue. His-148 lines the Zn(2+) pocket. The next 2 helical transmembrane spans lie at 159–179 (IALALTAAISFLINLGSNWWL) and 198–218 (LLVFILSLVVMIFAPLVAAVI). Glu-227 lines the Zn(2+) pocket.

It belongs to the peptidase M48B family. Requires Zn(2+) as cofactor.

The protein localises to the cell membrane. The chain is Protease HtpX homolog from Leuconostoc citreum (strain KM20).